A 468-amino-acid chain; its full sequence is Uronate isomerase (468 aa).

This sequence belongs to the metallo-dependent hydrolases superfamily. Uronate isomerase family.

The enzyme catalyses D-glucuronate = D-fructuronate. It catalyses the reaction aldehydo-D-galacturonate = keto-D-tagaturonate. The protein operates within carbohydrate metabolism; pentose and glucuronate interconversion. The polypeptide is Uronate isomerase (Bacteroides thetaiotaomicron (strain ATCC 29148 / DSM 2079 / JCM 5827 / CCUG 10774 / NCTC 10582 / VPI-5482 / E50)).